Consider the following 137-residue polypeptide: Golgin subfamily A member 7 (137 aa).

S-palmitoyl cysteine attachment occurs at residues cysteine 69 and cysteine 72.

It belongs to the ERF4 family. As to quaternary structure, interacts with GOLGA3. Interacts with ZDHHC9. In terms of processing, palmitoylated on Cys-69 and Cys-72; which is required for Golgi localization and interaction with GOLGA3.

It localises to the golgi apparatus membrane. May be involved in protein transport from Golgi to cell surface. The ZDHHC9-GOLGA7 complex is a palmitoyltransferase specific for HRAS and NRAS. This Rattus norvegicus (Rat) protein is Golgin subfamily A member 7 (Golga7).